The following is a 315-amino-acid chain: Putative heme-binding peroxidase (315 aa).

The Proton acceptor role is filled by His-40. His-169 contacts heme b. The active-site Tryptophan radical intermediate is Trp-185. The segment at 267 to 286 is disordered; that stretch reads EEGKPLDKTAPPAGDETCPV.

It belongs to the peroxidase family. Cytochrome c peroxidase subfamily. It depends on heme b as a cofactor.

In terms of biological role, destroys radicals which are normally produced within the cells and which are toxic to biological systems. This Cryptococcus neoformans var. neoformans serotype D (strain B-3501A) (Filobasidiella neoformans) protein is Putative heme-binding peroxidase.